We begin with the raw amino-acid sequence, 314 residues long: Olfactory receptor 9I1 (314 aa).

Residues 1–25 lie on the Extracellular side of the membrane; that stretch reads MAKNNLTRVTEFILMGFMDHPKLEI. The N-linked (GlcNAc...) asparagine glycan is linked to Asn5. Residues 26 to 46 traverse the membrane as a helical segment; sequence PLFLVFLSFYLVTLLGNVGMI. Over 47 to 54 the chain is Cytoplasmic; sequence MLIQVDVK. A helical membrane pass occupies residues 55–75; that stretch reads LYTPMYFFLSHLSLLDACYTS. Topologically, residues 76 to 99 are extracellular; the sequence is VITPQILATLATGKTVISYGHCAA. Cys97 and Cys189 are joined by a disulfide. Residues 100–120 traverse the membrane as a helical segment; sequence QFFLFTICAGTECFLLAVMAY. The Cytoplasmic portion of the chain corresponds to 121-139; it reads DRYAAIRNPLLYTVAMNPR. Residues 140–160 traverse the membrane as a helical segment; it reads LCWSLVVGAYVCGVSGAILRT. Topologically, residues 161 to 197 are extracellular; the sequence is TCTFTLSFCKDNQINFFFCDLPPLLKLACSDTANIEI. Residues 198 to 217 traverse the membrane as a helical segment; sequence VIIFFGNFVILANASVILIS. Over 218–237 the chain is Cytoplasmic; sequence YLLIIKTILKVKSSGGRAKT. Residues 238–258 traverse the membrane as a helical segment; sequence FSTCASHITAVALFFGALIFM. Residues 259 to 271 lie on the Extracellular side of the membrane; it reads YLQSGSGKSLEED. A helical transmembrane segment spans residues 272–292; it reads KVVSVFYTVVIPMLNPLIYSL. Over 293-314 the chain is Cytoplasmic; the sequence is RNKDVKDAFRKVARRLQVSLSM.

This sequence belongs to the G-protein coupled receptor 1 family.

Its subcellular location is the cell membrane. Its function is as follows. Odorant receptor. The polypeptide is Olfactory receptor 9I1 (OR9I1) (Homo sapiens (Human)).